A 226-amino-acid polypeptide reads, in one-letter code: uncharacterized protein (226 aa).

Residues 121–163 are a coiled coil; it reads TVDELIKTIEKELNKVKKSRKNREKKTNEVEEIIEELIEEDDI.

This is an uncharacterized protein from Methanocaldococcus jannaschii (strain ATCC 43067 / DSM 2661 / JAL-1 / JCM 10045 / NBRC 100440) (Methanococcus jannaschii).